Reading from the N-terminus, the 138-residue chain is ATP synthase epsilon chain (138 aa).

It belongs to the ATPase epsilon chain family. As to quaternary structure, F-type ATPases have 2 components, CF(1) - the catalytic core - and CF(0) - the membrane proton channel. CF(1) has five subunits: alpha(3), beta(3), gamma(1), delta(1), epsilon(1). CF(0) has three main subunits: a, b and c.

Its subcellular location is the cell inner membrane. In terms of biological role, produces ATP from ADP in the presence of a proton gradient across the membrane. This Polynucleobacter necessarius subsp. necessarius (strain STIR1) protein is ATP synthase epsilon chain.